Reading from the N-terminus, the 186-residue chain is Putative manganese efflux pump MntP (186 aa).

A run of 6 helical transmembrane segments spans residues 3-23, 39-59, 65-85, 109-129, 133-153, and 166-186; these read PIALLLLAFAMSTDAFAAAIG, IGIIFGSIEAITPLVGWLIGK, VEAWDHWIAFSLLTVLGLHMI, CLTAFSTSIDAMAVGVSLAFI, IWIASALIGLATTLMVTIGIM, and AEIFGGLTLIAVGAWILYGQL.

The protein belongs to the MntP (TC 9.B.29) family.

The protein resides in the cell inner membrane. Functionally, probably functions as a manganese efflux pump. This chain is Putative manganese efflux pump MntP, found in Alcanivorax borkumensis (strain ATCC 700651 / DSM 11573 / NCIMB 13689 / SK2).